Here is a 166-residue protein sequence, read N- to C-terminus: RNA polymerase sigma factor SigV (166 aa).

The short motif at 38–51 (DIVQESIKKALSSV) is the Polymerase core binding element. Positions 131-150 (LEEIAEITGENTNTVKTRLY) form a DNA-binding region, H-T-H motif.

Belongs to the sigma-70 factor family. ECF subfamily. In terms of assembly, interacts with RsiV.

Its function is as follows. Sigma factors are initiation factors that promote the attachment of RNA polymerase to specific initiation sites and are then released. Positively regulates the expression of proteins involved in stress responses against bacitracin, paraquat and tellurite. This Bacillus subtilis (strain 168) protein is RNA polymerase sigma factor SigV (sigV).